A 607-amino-acid polypeptide reads, in one-letter code: Developmental gene 1062 protein (607 aa).

Disordered stretches follow at residues leucine 62–glutamine 84, isoleucine 334–glutamine 451, and aspartate 568–leucine 602. Low complexity predominate over residues isoleucine 334–serine 363. The span at serine 364–serine 382 shows a compositional bias: acidic residues. Low complexity-rich tracts occupy residues isoleucine 383–glutamine 451 and aspartate 568–asparagine 582.

This chain is Developmental gene 1062 protein (DG1062), found in Dictyostelium discoideum (Social amoeba).